Reading from the N-terminus, the 200-residue chain is Small ribosomal subunit protein uS4 (200 aa).

The segment at 22–42 (TGKELQKRPYPPGQHGPGQRR) is disordered. Residues 92–152 (SRLDNLVYRL…EKSRNLQVIK (61 aa)) form the S4 RNA-binding domain.

This sequence belongs to the universal ribosomal protein uS4 family. As to quaternary structure, part of the 30S ribosomal subunit. Contacts protein S5. The interaction surface between S4 and S5 is involved in control of translational fidelity.

In terms of biological role, one of the primary rRNA binding proteins, it binds directly to 16S rRNA where it nucleates assembly of the body of the 30S subunit. Functionally, with S5 and S12 plays an important role in translational accuracy. The chain is Small ribosomal subunit protein uS4 from Geobacillus kaustophilus (strain HTA426).